The primary structure comprises 391 residues: 8-amino-7-oxononanoate synthase (391 aa).

R19 lines the substrate pocket. A pyridoxal 5'-phosphate-binding site is contributed by G106–Y107. Residue H131 coordinates substrate. 3 residues coordinate pyridoxal 5'-phosphate: S178, H206, and T234. At K237 the chain carries N6-(pyridoxal phosphate)lysine. T353 is a binding site for substrate.

Belongs to the class-II pyridoxal-phosphate-dependent aminotransferase family. BioF subfamily. As to quaternary structure, homodimer. Requires pyridoxal 5'-phosphate as cofactor.

The catalysed reaction is 6-carboxyhexanoyl-[ACP] + L-alanine + H(+) = (8S)-8-amino-7-oxononanoate + holo-[ACP] + CO2. The protein operates within cofactor biosynthesis; biotin biosynthesis. Functionally, catalyzes the decarboxylative condensation of pimeloyl-[acyl-carrier protein] and L-alanine to produce 8-amino-7-oxononanoate (AON), [acyl-carrier protein], and carbon dioxide. This chain is 8-amino-7-oxononanoate synthase, found in Geobacter sulfurreducens (strain ATCC 51573 / DSM 12127 / PCA).